Consider the following 317-residue polypeptide: Melanocyte-stimulating hormone receptor (317 aa).

Topologically, residues 1-37 are extracellular; it reads MPVLGSQRRLLGSLNCTPPATFPLTLAPNRTGPQCLE. Asn29 is a glycosylation site (N-linked (GlcNAc...) asparagine). A helical membrane pass occupies residues 38 to 63; that stretch reads VSIPDGLFLSLGLVSLVENVLVVAAI. Over 64–72 the chain is Cytoplasmic; it reads AKNRNLHSP. The helical transmembrane segment at 73–93 threads the bilayer; the sequence is MYYFICCLAVSDLLVSVSNVL. Over 94–118 the chain is Extracellular; the sequence is ETAVMLLLEAGALAARAAVVQQLDN. A helical transmembrane segment spans residues 119–140; that stretch reads VIDMLICGSMVSSLCFLGAIAV. The Cytoplasmic segment spans residues 141–163; it reads DRYISIFYALRYHSVVTLPRAWR. The helical transmembrane segment at 164–183 threads the bilayer; it reads IIAAIWVASILTSLLFITYY. Over 184–191 the chain is Extracellular; the sequence is NHTVVLLC. A helical membrane pass occupies residues 192–211; it reads LVGFFIAMLALMAVLYVHML. Over 212–240 the chain is Cytoplasmic; that stretch reads ARACQHARGIARLQKRQRPIHQGFGLKGA. A helical transmembrane segment spans residues 241–266; the sequence is ATLTILLGVFFLCWGPFFLHLSLIVL. At 267–279 the chain is on the extracellular side; it reads CPQHPTCGCIFKN. The helical transmembrane segment at 280–300 threads the bilayer; sequence FNLFLALIICNAIVDPLIYAF. At 301-317 the chain is on the cytoplasmic side; the sequence is RSQELRKTLQEVLQCSW. Cys315 is lipidated: S-palmitoyl cysteine.

The protein belongs to the G-protein coupled receptor 1 family. As to quaternary structure, interacts with MGRN1, but does not undergo MGRN1-mediated ubiquitination; this interaction competes with GNAS-binding and thus inhibits agonist-induced cAMP production. Interacts with OPN3; the interaction results in a decrease in MC1R-mediated cAMP signaling and ultimately a decrease in melanin production in melanocytes.

Its subcellular location is the cell membrane. Receptor for MSH (alpha, beta and gamma) and ACTH. The activity of this receptor is mediated by G proteins which activate adenylate cyclase. Mediates melanogenesis, the production of eumelanin (black/brown) and phaeomelanin (red/yellow), via regulation of cAMP signaling in melanocytes. This is Melanocyte-stimulating hormone receptor (MC1R) from Capreolus capreolus (European roe deer).